Consider the following 554-residue polypeptide: Intraflagellar transport protein 56 (554 aa).

Positions 1–27 are disordered; the sequence is MMLSRAKPAVGGESPHTDKRKKKGRKI. A compositionally biased stretch (basic residues) spans 18–27; that stretch reads DKRKKKGRKI. TPR repeat units follow at residues 57 to 90, 92 to 125, 151 to 184, and 468 to 501; these read DDTN…ENCN, EVWV…LQNR, KEDQ…NREY, and ANDC…EGKR.

Belongs to the IFT56 family. As to quaternary structure, component of the IFT complex B. Interacts with IFT46; the interaction is direct. High expression detected in testis. Detected also retina, kidney, lung and brain tissue. The expression level is low in spleen. Expressed in the developing liver. Present in the airway epithelial cells and the testes (at protein level).

It localises to the cell projection. The protein localises to the cilium. In terms of biological role, component of the intraflagellar transport (IFT) complex B required for transport of proteins in the motile cilium. Required for transport of specific ciliary cargo proteins related to motility, while it is neither required for IFT complex B assembly or motion nor for cilium assembly. Required for efficient coupling between the accumulation of GLI2 and GLI3 at the ciliary tips and their dissociation from the negative regulator SUFU. Plays a key role in maintaining the integrity of the IFT complex B and the proper ciliary localization of the IFT complex B components. Not required for IFT complex A ciliary localization or function. Essential for maintaining proper microtubule organization within the ciliary axoneme. The protein is Intraflagellar transport protein 56 of Mus musculus (Mouse).